The primary structure comprises 346 residues: NADH-ubiquinone oxidoreductase chain 2 (346 aa).

The next 10 membrane-spanning stretches (helical) occupy residues 25 to 45, 56 to 76, 94 to 114, 122 to 142, 148 to 168, 178 to 198, 200 to 220, 240 to 260, 278 to 298, and 325 to 345; these read NLLL…PLLA, ATKY…VIIL, LLNM…FHYW, IPLH…LSIL, LLNP…GAWG, IMAY…PYNP, LTLL…ITLM, ILTM…LTGF, LSTL…RLIY, and FILP…SQLI.

Belongs to the complex I subunit 2 family. In terms of assembly, core subunit of respiratory chain NADH dehydrogenase (Complex I) which is composed of 45 different subunits. Interacts with TMEM242.

It is found in the mitochondrion inner membrane. It catalyses the reaction a ubiquinone + NADH + 5 H(+)(in) = a ubiquinol + NAD(+) + 4 H(+)(out). Core subunit of the mitochondrial membrane respiratory chain NADH dehydrogenase (Complex I) which catalyzes electron transfer from NADH through the respiratory chain, using ubiquinone as an electron acceptor. Essential for the catalytic activity and assembly of complex I. In Rattus norvegicus (Rat), this protein is NADH-ubiquinone oxidoreductase chain 2.